The chain runs to 441 residues: Tubulin alpha chain (441 aa).

GTP-binding residues include glutamine 11, glutamate 68, serine 137, glycine 141, threonine 142, threonine 176, asparagine 203, and asparagine 224. Position 68 (glutamate 68) interacts with Mg(2+). Residue glutamate 250 is part of the active site.

It belongs to the tubulin family. In terms of assembly, dimer of alpha and beta chains. A typical microtubule is a hollow water-filled tube with an outer diameter of 25 nm and an inner diameter of 15 nM. Alpha-beta heterodimers associate head-to-tail to form protofilaments running lengthwise along the microtubule wall with the beta-tubulin subunit facing the microtubule plus end conferring a structural polarity. Microtubules usually have 13 protofilaments but different protofilament numbers can be found in some organisms and specialized cells. Mg(2+) serves as cofactor.

The protein localises to the cytoplasm. The protein resides in the cytoskeleton. The catalysed reaction is GTP + H2O = GDP + phosphate + H(+). Its function is as follows. Tubulin is the major constituent of microtubules, a cylinder consisting of laterally associated linear protofilaments composed of alpha- and beta-tubulin heterodimers. Microtubules grow by the addition of GTP-tubulin dimers to the microtubule end, where a stabilizing cap forms. Below the cap, tubulin dimers are in GDP-bound state, owing to GTPase activity of alpha-tubulin. The chain is Tubulin alpha chain (TUB1) from Encephalitozoon cuniculi (strain GB-M1) (Microsporidian parasite).